The following is a 195-amino-acid chain: Thymidine kinase (195 aa).

ATP-binding positions include 15-22 and 88-91; these read GSMFSGKS and DEVQ. Glutamate 89 functions as the Proton acceptor in the catalytic mechanism. 4 residues coordinate Zn(2+): cysteine 145, cysteine 148, cysteine 183, and residue 186.

This sequence belongs to the thymidine kinase family. As to quaternary structure, homotetramer.

The protein resides in the cytoplasm. It catalyses the reaction thymidine + ATP = dTMP + ADP + H(+). The sequence is that of Thymidine kinase from Bacillus cereus (strain ATCC 10987 / NRS 248).